The chain runs to 360 residues: DNA replication and repair protein RecF (360 aa).

33–40 (GENGSGKT) lines the ATP pocket.

Belongs to the RecF family.

It is found in the cytoplasm. Functionally, the RecF protein is involved in DNA metabolism; it is required for DNA replication and normal SOS inducibility. RecF binds preferentially to single-stranded, linear DNA. It also seems to bind ATP. The polypeptide is DNA replication and repair protein RecF (Rickettsia rickettsii (strain Iowa)).